A 382-amino-acid chain; its full sequence is D-galactonate dehydratase (382 aa).

D183 contacts Mg(2+). The active-site Proton donor is the H185. 2 residues coordinate Mg(2+): E209 and E235. H285 acts as the Proton acceptor in catalysis.

Belongs to the mandelate racemase/muconate lactonizing enzyme family. GalD subfamily. Mg(2+) serves as cofactor.

The catalysed reaction is D-galactonate = 2-dehydro-3-deoxy-D-galactonate + H2O. Its pathway is carbohydrate acid metabolism; D-galactonate degradation; D-glyceraldehyde 3-phosphate and pyruvate from D-galactonate: step 1/3. Functionally, catalyzes the dehydration of D-galactonate to 2-keto-3-deoxy-D-galactonate. This is D-galactonate dehydratase from Klebsiella pneumoniae subsp. pneumoniae (strain ATCC 700721 / MGH 78578).